A 518-amino-acid polypeptide reads, in one-letter code: ATP synthase subunit alpha (518 aa).

169–176 (GDRQTGKT) serves as a coordination point for ATP.

This sequence belongs to the ATPase alpha/beta chains family. As to quaternary structure, F-type ATPases have 2 components, CF(1) - the catalytic core - and CF(0) - the membrane proton channel. CF(1) has five subunits: alpha(3), beta(3), gamma(1), delta(1), epsilon(1). CF(0) has three main subunits: a(1), b(2) and c(9-12). The alpha and beta chains form an alternating ring which encloses part of the gamma chain. CF(1) is attached to CF(0) by a central stalk formed by the gamma and epsilon chains, while a peripheral stalk is formed by the delta and b chains.

It localises to the cell membrane. It carries out the reaction ATP + H2O + 4 H(+)(in) = ADP + phosphate + 5 H(+)(out). Its function is as follows. Produces ATP from ADP in the presence of a proton gradient across the membrane. The alpha chain is a regulatory subunit. The sequence is that of ATP synthase subunit alpha from Mycoplasma pneumoniae (strain ATCC 29342 / M129 / Subtype 1) (Mycoplasmoides pneumoniae).